A 126-amino-acid chain; its full sequence is Small ribosomal subunit protein bS6 (126 aa).

The tract at residues 104-126 is disordered; it reads QGAEKGKSSSKKVAAEAEASEEA.

It belongs to the bacterial ribosomal protein bS6 family.

Binds together with bS18 to 16S ribosomal RNA. The sequence is that of Small ribosomal subunit protein bS6 from Coxiella burnetii (strain Dugway 5J108-111).